The following is a 177-amino-acid chain: Adenine phosphoribosyltransferase (177 aa).

This sequence belongs to the purine/pyrimidine phosphoribosyltransferase family. In terms of assembly, homodimer.

The protein localises to the cytoplasm. The catalysed reaction is AMP + diphosphate = 5-phospho-alpha-D-ribose 1-diphosphate + adenine. The protein operates within purine metabolism; AMP biosynthesis via salvage pathway; AMP from adenine: step 1/1. Catalyzes a salvage reaction resulting in the formation of AMP, that is energically less costly than de novo synthesis. The protein is Adenine phosphoribosyltransferase of Rhodococcus jostii (strain RHA1).